An 85-amino-acid chain; its full sequence is Large ribosomal subunit protein bL31B (85 aa).

Belongs to the bacterial ribosomal protein bL31 family. Type B subfamily. Part of the 50S ribosomal subunit.

This is Large ribosomal subunit protein bL31B from Pseudomonas entomophila (strain L48).